The primary structure comprises 947 residues: Protein NETWORKED 2D (947 aa).

In terms of domain architecture, NAB spans Tyr10 to Leu90. Coiled coils occupy residues Lys176–Glu205, Met247–Ser342, and Thr375–Lys433. Disordered regions lie at residues Asn455 to Asp555 and Glu580 to Asp620. The span at Pro474–Gln514 shows a compositional bias: basic and acidic residues. Polar residues predominate over residues Thr525–Glu536. 3 stretches are compositionally biased toward basic and acidic residues: residues Ser537–Asp555, Glu580–Asp589, and Glu610–Asp620. Coiled-coil stretches lie at residues Arg645–Lys684 and Gly744–Ser773.

The protein belongs to the NET family.

Its function is as follows. Plant-specific actin binding protein. May be part of a membrane-cytoskeletal adapter complex. The sequence is that of Protein NETWORKED 2D from Arabidopsis thaliana (Mouse-ear cress).